The chain runs to 185 residues: Fimbrial subunit type 1 (185 aa).

A signal peptide spans 1 to 22 (MRHKLMTSTIASLMFVAAAAVA). An intrachain disulfide couples C46 to C86.

Belongs to the fimbrial protein family.

It localises to the fimbrium. In Salmonella typhimurium, this protein is Fimbrial subunit type 1.